An 873-amino-acid chain; its full sequence is Ectonucleotide pyrophosphatase/phosphodiesterase family member 3 (873 aa).

Residues 1 to 11 (MESMLTLAMEQ) are Cytoplasmic-facing. Residues 12–30 (PVKRNTLKKYKIACIVLLA) form a helical; Signal-anchor for type II membrane protein membrane-spanning segment. At 31–873 (LLVIVSLGLG…TYLPTFETTI (843 aa)) the chain is on the extracellular side. SMB domains follow at residues 51-93 (QGSC…VEST) and 94-138 (RIWM…GETS). 10 disulfides stabilise this stretch: cysteine 54-cysteine 71, cysteine 58-cysteine 89, cysteine 69-cysteine 82, cysteine 75-cysteine 81, cysteine 98-cysteine 115, cysteine 103-cysteine 133, cysteine 113-cysteine 126, cysteine 119-cysteine 125, cysteine 144-cysteine 190, and cysteine 152-cysteine 364. The short motif at 78-80 (RGD) is the Cell attachment site element. Residues 160 to 544 (PVILFSMDGF…HGSLNHLLKV (385 aa)) form a phosphodiesterase region. Aspartate 167 contributes to the Zn(2+) binding site. Lysine 204 is an ATP binding site. Residue threonine 205 coordinates Zn(2+). Catalysis depends on threonine 205, which acts as the Nucleophile. Asparagine 226 lines the ATP pocket. The N-linked (GlcNAc...) asparagine glycan is linked to asparagine 236. Residue glutamate 275 participates in ATP binding. N-linked (GlcNAc...) asparagine glycosylation is present at asparagine 279. Residue tyrosine 289 participates in ATP binding. N-linked (GlcNAc...) asparagine glycosylation is present at asparagine 290. Aspartate 325, histidine 329, aspartate 372, and histidine 373 together coordinate Zn(2+). 6 disulfide bridges follow: cysteine 380/cysteine 477, cysteine 428/cysteine 816, cysteine 561/cysteine 621, cysteine 573/cysteine 677, cysteine 575/cysteine 662, and cysteine 785/cysteine 795. An N-linked (GlcNAc...) asparagine glycan is attached at asparagine 425. Residue histidine 482 participates in Zn(2+) binding. Residues asparagine 532, asparagine 592, asparagine 685, and asparagine 697 are each glycosylated (N-linked (GlcNAc...) asparagine). The tract at residues 580-873 (NSIQLEQVNQ…TYLPTFETTI (294 aa)) is nuclease. Ca(2+) contacts are provided by aspartate 750, asparagine 752, aspartate 754, histidine 756, and aspartate 758. Residue asparagine 787 is glycosylated (N-linked (GlcNAc...) asparagine).

In terms of assembly, monomer and homodimer. The cofactor is Zn(2+). N-glycosylated. N-glycosylation is necessary for normal transport to the cell membrane, but is not the apical targeting signal.

It localises to the cell membrane. Its subcellular location is the apical cell membrane. The protein resides in the secreted. The enzyme catalyses a ribonucleoside 5'-triphosphate + H2O = a ribonucleoside 5'-phosphate + diphosphate + H(+). It carries out the reaction ATP + H2O = AMP + diphosphate + H(+). It catalyses the reaction CTP + H2O = CMP + diphosphate + H(+). The catalysed reaction is GTP + H2O = GMP + diphosphate + H(+). The enzyme catalyses UTP + H2O = UMP + diphosphate + H(+). It carries out the reaction UDP-N-acetyl-alpha-D-glucosamine + H2O = N-acetyl-alpha-D-glucosamine 1-phosphate + UMP + 2 H(+). It catalyses the reaction P(1),P(3)-bis(5'-adenosyl) triphosphate + H2O = AMP + ADP + 2 H(+). The catalysed reaction is P(1),P(4)-bis(5'-adenosyl) tetraphosphate + H2O = AMP + ATP + 2 H(+). The enzyme catalyses P(1),P(5)-bis(5'-adenosyl) pentaphosphate + H2O = adenosine 5'-tetraphosphate + AMP + 2 H(+). It carries out the reaction P(1),P(4)-bis(5'-guanosyl) tetraphosphate + H2O = GMP + GTP + 2 H(+). It catalyses the reaction Hydrolytically removes 5'-nucleotides successively from the 3'-hydroxy termini of 3'-hydroxy-terminated oligonucleotides.. Hydrolase that metabolizes extracellular nucleotides, including ATP, GTP, UTP and CTP. Limits mast cells and basophils response during inflammation and during the chronic phases of allergic responses by eliminating extracellular ATP, a signaling molecule activating these cells in an autocrine manner. Metabolizes extracellular ATP in the lumen of the small intestine, and thereby prevents ATP-induced apoptosis of intestinal plasmacytoid dendritic cells. Has a broad specificity and can also hydrolyze UDP-GlcNAc into UMP and GlcNAc-1-phosphate and potentially several other intracellular nucleotide sugars, including UDP-GalNAc, CMP-NeuAc, GDP-Fuc, and UDP-GlcA. Thereby, could modulate glycan biosynthesis and protein glycosylation. Can hydrolyze extracellular dinucleoside polyphosphates, including the vasoactive adenosine polyphosphates as well. In addition, displays an alkaline phosphodiesterase activity in vitro. This is Ectonucleotide pyrophosphatase/phosphodiesterase family member 3 from Pongo abelii (Sumatran orangutan).